We begin with the raw amino-acid sequence, 163 residues long: Cyanate hydratase (163 aa).

Active-site residues include Arg103, Glu106, and Ser129.

Belongs to the cyanase family.

It carries out the reaction cyanate + hydrogencarbonate + 3 H(+) = NH4(+) + 2 CO2. Functionally, catalyzes the reaction of cyanate with bicarbonate to produce ammonia and carbon dioxide. This Talaromyces stipitatus (strain ATCC 10500 / CBS 375.48 / QM 6759 / NRRL 1006) (Penicillium stipitatum) protein is Cyanate hydratase.